The sequence spans 245 residues: Orotidine 5'-phosphate decarboxylase (245 aa).

Residues Asp22, Lys44, 71–80, Thr131, Arg192, Gln201, Gly221, and Arg222 each bind substrate; that span reads DLKFHDIPNT. Residue Lys73 is the Proton donor of the active site.

It belongs to the OMP decarboxylase family. Type 1 subfamily. Homodimer.

The catalysed reaction is orotidine 5'-phosphate + H(+) = UMP + CO2. The protein operates within pyrimidine metabolism; UMP biosynthesis via de novo pathway; UMP from orotate: step 2/2. Catalyzes the decarboxylation of orotidine 5'-monophosphate (OMP) to uridine 5'-monophosphate (UMP). In Yersinia pestis bv. Antiqua (strain Antiqua), this protein is Orotidine 5'-phosphate decarboxylase.